The following is a 1013-amino-acid chain: Sodium/potassium-transporting ATPase subunit alpha-3 (1013 aa).

The tract at residues 1-24 (MGDKKDDKDSPKKNKGKERRDLDD) is disordered. Over 1–77 (MGDKKDDKDS…NALTPPPTTP (77 aa)) the chain is Cytoplasmic. S37 and S56 each carry phosphoserine. Positions 72 to 74 (PPP) are interaction with phosphoinositide-3 kinase. The helical transmembrane segment at 78-98 (EWVKFCRQLFGGFSILLWIGA) threads the bilayer. At 99–121 (ILCFLAYGIQAGTEDDPSGDNLY) the chain is on the extracellular side. The chain crosses the membrane as a helical span at residues 122-142 (LGIVLAAVVIITGCFSYYQEA). Residues 143 to 278 (KSSKIMESFK…VGKTPIAIEI (136 aa)) are Cytoplasmic-facing. A phosphoserine mark is found at S218 and S265. Residues 279–298 (EHFIQLITGVAVFLGVSFFI) form a helical membrane-spanning segment. The Extracellular portion of the chain corresponds to 299-310 (LSLILGYTWLEA). The chain crosses the membrane as a helical span at residues 311 to 328 (VIFLIGIIVANVPEGLLA). The Cytoplasmic portion of the chain corresponds to 329–762 (TVTVCLTLTA…EEGRLIFDNL (434 aa)). Residue D366 is the 4-aspartylphosphate intermediate of the active site. At S442 the chain carries Phosphoserine. At Y548 the chain carries Phosphotyrosine. Residues D707 and D711 each contribute to the Mg(2+) site. A helical transmembrane segment spans residues 763–782 (KKSIAYTLTSNIPEITPFLL). Residues 783–792 (FIMANIPLPL) are Extracellular-facing. A helical membrane pass occupies residues 793-813 (GTITILCIDLGTDMVPAISLA). Over 814–833 (YEAAESDIMKRQPRNPRTDK) the chain is Cytoplasmic. Residues 834-856 (LVNERLISMAYGQIGMIQALGGF) form a helical membrane-spanning segment. At 857-908 (FSYFVILAENGFLPGNLVGIRLNWDDRTVNDLEDSYGQQWTYEQRKVVEFTC) the chain is on the extracellular side. The chain crosses the membrane as a helical span at residues 909-928 (HTAFFVSIVVVQWADLIICK). At 929–941 (TRRNSVFQQGMKN) the chain is on the cytoplasmic side. Position 933 is a phosphoserine; by PKA (S933). A helical membrane pass occupies residues 942 to 960 (KILIFGLFEETALAAFLSY). The Extracellular segment spans residues 961-975 (CPGMDVALRMYPLKP). Residues 976–996 (SWWFCAFPYSFLIFVYDEIRK) traverse the membrane as a helical segment. The Cytoplasmic portion of the chain corresponds to 997–1013 (LILRRNPGGWVEKETYY).

The protein belongs to the cation transport ATPase (P-type) (TC 3.A.3) family. Type IIC subfamily. In terms of assembly, the sodium/potassium-transporting ATPase is composed of a catalytic alpha subunit, an auxiliary non-catalytic beta subunit and an additional regulatory subunit. Interacts with regulatory subunit FXYD1.

The protein resides in the cell membrane. The enzyme catalyses K(+)(out) + Na(+)(in) + ATP + H2O = K(+)(in) + Na(+)(out) + ADP + phosphate + H(+). Its function is as follows. This is the catalytic component of the active enzyme, which catalyzes the hydrolysis of ATP coupled with the exchange of sodium and potassium ions across the plasma membrane. This action creates the electrochemical gradient of sodium and potassium ions, providing the energy for active transport of various nutrients. This Homo sapiens (Human) protein is Sodium/potassium-transporting ATPase subunit alpha-3 (ATP1A3).